Here is a 281-residue protein sequence, read N- to C-terminus: 2-dehydro-3-deoxyphosphooctonate aldolase (281 aa).

This sequence belongs to the KdsA family.

It localises to the cytoplasm. It carries out the reaction D-arabinose 5-phosphate + phosphoenolpyruvate + H2O = 3-deoxy-alpha-D-manno-2-octulosonate-8-phosphate + phosphate. It participates in carbohydrate biosynthesis; 3-deoxy-D-manno-octulosonate biosynthesis; 3-deoxy-D-manno-octulosonate from D-ribulose 5-phosphate: step 2/3. It functions in the pathway bacterial outer membrane biogenesis; lipopolysaccharide biosynthesis. The sequence is that of 2-dehydro-3-deoxyphosphooctonate aldolase from Pseudomonas savastanoi pv. phaseolicola (strain 1448A / Race 6) (Pseudomonas syringae pv. phaseolicola (strain 1448A / Race 6)).